A 124-amino-acid polypeptide reads, in one-letter code: Small ribosomal subunit protein uS10z/uS10x (124 aa).

The protein belongs to the universal ribosomal protein uS10 family.

This is Small ribosomal subunit protein uS10z/uS10x (RPS20A) from Arabidopsis thaliana (Mouse-ear cress).